The sequence spans 134 residues: MSWQAYVDDHLMCDIEGHEGHRLTAAAIVGHDGSVWAQSATFPQFKPEEMNGIMTDFNEPGHLAPTGLHLGGTKYMVIQGEAGAVIRGKKGSGGITIKKTGQALVCGIYEEPVTPGQCNMVVERLGDYLLEQGL.

Residues Cys-13 and Cys-118 are joined by a disulfide bond. Positions Ala-84–Thr-100 match the Involved in PIP2 interaction motif. Position 114 is a phosphothreonine (Thr-114).

The protein belongs to the profilin family. In terms of assembly, occurs in many kinds of cells as a complex with monomeric actin in a 1:1 ratio. Phosphorylated by MAP kinases.

The protein resides in the cytoplasm. The protein localises to the cytoskeleton. Binds to actin and affects the structure of the cytoskeleton. At high concentrations, profilin prevents the polymerization of actin, whereas it enhances it at low concentrations. The sequence is that of Profilin-3 from Olea europaea (Common olive).